The primary structure comprises 335 residues: Holliday junction branch migration complex subunit RuvB (335 aa).

Residues 4-184 form a large ATPase domain (RuvB-L) region; the sequence is ADRIISSNAQ…FGIVQRLEFY (181 aa). ATP is bound by residues isoleucine 23, arginine 24, glycine 65, lysine 68, threonine 69, threonine 70, 131–133, arginine 174, tyrosine 184, and arginine 221; that span reads EDY. Threonine 69 serves as a coordination point for Mg(2+). The segment at 185–255 is small ATPAse domain (RuvB-S); the sequence is SVEDLTSIVA…IAKSALSMLD (71 aa). The head domain (RuvB-H) stretch occupies residues 258–335; the sequence is QAGFDYLDRK…RHFGLDKLTE (78 aa). DNA-binding residues include arginine 294, arginine 313, and arginine 318.

This sequence belongs to the RuvB family. In terms of assembly, homohexamer. Forms an RuvA(8)-RuvB(12)-Holliday junction (HJ) complex. HJ DNA is sandwiched between 2 RuvA tetramers; dsDNA enters through RuvA and exits via RuvB. An RuvB hexamer assembles on each DNA strand where it exits the tetramer. Each RuvB hexamer is contacted by two RuvA subunits (via domain III) on 2 adjacent RuvB subunits; this complex drives branch migration. In the full resolvosome a probable DNA-RuvA(4)-RuvB(12)-RuvC(2) complex forms which resolves the HJ.

It is found in the cytoplasm. It catalyses the reaction ATP + H2O = ADP + phosphate + H(+). The RuvA-RuvB-RuvC complex processes Holliday junction (HJ) DNA during genetic recombination and DNA repair, while the RuvA-RuvB complex plays an important role in the rescue of blocked DNA replication forks via replication fork reversal (RFR). RuvA specifically binds to HJ cruciform DNA, conferring on it an open structure. The RuvB hexamer acts as an ATP-dependent pump, pulling dsDNA into and through the RuvAB complex. RuvB forms 2 homohexamers on either side of HJ DNA bound by 1 or 2 RuvA tetramers; 4 subunits per hexamer contact DNA at a time. Coordinated motions by a converter formed by DNA-disengaged RuvB subunits stimulates ATP hydrolysis and nucleotide exchange. Immobilization of the converter enables RuvB to convert the ATP-contained energy into a lever motion, pulling 2 nucleotides of DNA out of the RuvA tetramer per ATP hydrolyzed, thus driving DNA branch migration. The RuvB motors rotate together with the DNA substrate, which together with the progressing nucleotide cycle form the mechanistic basis for DNA recombination by continuous HJ branch migration. Branch migration allows RuvC to scan DNA until it finds its consensus sequence, where it cleaves and resolves cruciform DNA. The polypeptide is Holliday junction branch migration complex subunit RuvB (Mannheimia succiniciproducens (strain KCTC 0769BP / MBEL55E)).